A 320-amino-acid polypeptide reads, in one-letter code: Metapyrocatechase 2 (320 aa).

2 disordered regions span residues 1–21 (MDTHRADASQRSQAPAARPRH) and 131–153 (GPKTSPSSKSPARLEGAPGGQRG). 2 VOC domains span residues 25-131 (SIDH…VKIG) and 167-282 (RLSH…YSAD). Fe cation is bound by residues His-170, His-227, and Glu-278.

This sequence belongs to the extradiol ring-cleavage dioxygenase family. Requires Fe(2+) as cofactor.

It catalyses the reaction catechol + O2 = (2Z,4E)-2-hydroxy-6-oxohexa-2,4-dienoate + H(+). In Cupriavidus necator (Alcaligenes eutrophus), this protein is Metapyrocatechase 2 (mcpII).